Reading from the N-terminus, the 223-residue chain is Deoxyribose-phosphate aldolase (223 aa).

Catalysis depends on Asp-92, which acts as the Proton donor/acceptor. Lys-154 acts as the Schiff-base intermediate with acetaldehyde in catalysis. The active-site Proton donor/acceptor is the Lys-182.

Belongs to the DeoC/FbaB aldolase family. DeoC type 1 subfamily.

Its subcellular location is the cytoplasm. It carries out the reaction 2-deoxy-D-ribose 5-phosphate = D-glyceraldehyde 3-phosphate + acetaldehyde. It functions in the pathway carbohydrate degradation; 2-deoxy-D-ribose 1-phosphate degradation; D-glyceraldehyde 3-phosphate and acetaldehyde from 2-deoxy-alpha-D-ribose 1-phosphate: step 2/2. In terms of biological role, catalyzes a reversible aldol reaction between acetaldehyde and D-glyceraldehyde 3-phosphate to generate 2-deoxy-D-ribose 5-phosphate. In Pasteurella multocida (strain Pm70), this protein is Deoxyribose-phosphate aldolase.